The following is a 394-amino-acid chain: Elongation factor Tu (394 aa).

The tr-type G domain maps to 10–204 (KPHVNIGTIG…AVDSYIPQPV (195 aa)). Positions 19–26 (GHVDHGKT) are G1. 19–26 (GHVDHGKT) provides a ligand contact to GTP. Residue threonine 26 coordinates Mg(2+). The interval 60-64 (GITIS) is G2. The segment at 81-84 (DCPG) is G3. GTP contacts are provided by residues 81 to 85 (DCPGH) and 136 to 139 (NKVD). The tract at residues 136 to 139 (NKVD) is G4. Positions 174–176 (SAL) are G5.

The protein belongs to the TRAFAC class translation factor GTPase superfamily. Classic translation factor GTPase family. EF-Tu/EF-1A subfamily. In terms of assembly, monomer.

It is found in the cytoplasm. It catalyses the reaction GTP + H2O = GDP + phosphate + H(+). GTP hydrolase that promotes the GTP-dependent binding of aminoacyl-tRNA to the A-site of ribosomes during protein biosynthesis. The protein is Elongation factor Tu of Rickettsia felis (strain ATCC VR-1525 / URRWXCal2) (Rickettsia azadi).